We begin with the raw amino-acid sequence, 696 residues long: Junctophilin-2 (696 aa).

Residues 1–674 (MSGGRFDFDD…EVEVEEVPNT (674 aa)) are Cytoplasmic-facing. MORN repeat units follow at residues 14 to 36 (YCGGWEGGKAHGHGLCTGPKGQG), 38 to 59 (YSGSWNFGFEVAGVYTWPSGNT), 60 to 79 (FEGYWSQGKRHGLGIETKGR), 82 to 104 (YKGEWTHGFKGRYGIRQSTNSGA), 106 to 128 (YEGTWNNGLQDGYGTETYADGGT), and 129 to 151 (YQGQFTNGMRHGYGVRQSVPYGM). Phosphoserine occurs at positions 162 and 165. 2 disordered regions span residues 164-192 (SSLRSEHSNGTVAPDSPAADGPMLPSPPV) and 246-273 (LSSGASDAASTGSLAEGAEGPDDAAAPF). MORN repeat units follow at residues 285-307 (YMGEWKNDKRSGFGVSERSSGLR) and 308-330 (YEGEWLDNLRHGYGRTTLPDGHR). Residues 345 to 359 (KRRVLPLKSSKVRQK) carry the Bipartite nuclear localization signal motif. Residues 439 to 664 (NSESLLEPPE…RKEVAQAKEA (226 aa)) are disordered. Serine 440, serine 442, and serine 462 each carry phosphoserine. The span at 457–471 (ERPRESPQLHERETP) shows a compositional bias: basic and acidic residues. Threonine 470 is subject to Phosphothreonine. Residues 474-487 (EGGPPSPAGTPPQP) show a composition bias toward pro residues. The residue at position 479 (serine 479) is a Phosphoserine. Position 483 is a phosphothreonine (threonine 483). The Nuclear localization signal motif lies at 488-492 (KRPRP). Serine 527 and serine 533 each carry phosphoserine. Residues 573 to 585 (PLEDEQEPEPEPE) show a composition bias toward acidic residues. 3 positions are modified to phosphoserine: serine 593, serine 597, and serine 613. Residues 631–644 (AEPKAKARKTEARG) are compositionally biased toward basic and acidic residues. A helical; Anchor for type IV membrane protein membrane pass occupies residues 675 to 695 (VLICMVILLNIGLAILFVHLL).

The protein belongs to the junctophilin family. Interacts with TRPC3. Interacts with BAG5 and HSPA8; the interaction with HSPA8 is increased in the presence of BAG5. In terms of assembly, interacts with MEF2C. Proteolytically cleaved by calpain in response to cardiac stress. The major cleavage site takes place at the C-terminus and leads to the release of the Junctophilin-2 N-terminal fragment chain (JP2NT). In terms of processing, phosphorylation on Ser-165, probably by PKC, affects RYR1-mediated calcium ion release, interaction with TRPC3, and skeletal muscle myotubule development. Abundantly expressed in skeletal muscle and heart. Weak expression in stomach and lung.

Its subcellular location is the cell membrane. It is found in the sarcoplasmic reticulum membrane. It localises to the endoplasmic reticulum membrane. The protein localises to the nucleus. In terms of biological role, membrane-binding protein that provides a structural bridge between the plasma membrane and the sarcoplasmic reticulum and is required for normal excitation-contraction coupling in cardiomyocytes. Provides a structural foundation for functional cross-talk between the cell surface and intracellular Ca(2+) release channels by maintaining the 12-15 nm gap between the sarcolemma and the sarcoplasmic reticulum membranes in the cardiac dyads. Necessary for proper intracellular Ca(2+) signaling in cardiac myocytes via its involvement in ryanodine receptor-mediated calcium ion release. Contributes to the construction of skeletal muscle triad junctions. Functionally, transcription repressor required to safeguard against the deleterious effects of cardiac stress. Generated following cleavage of the Junctophilin-2 chain by calpain in response to cardiac stress in cardiomyocytes. Following cleavage and release from the membrane, translocates to the nucleus, binds DNA and represses expression of genes implicated in cell growth and differentiation, hypertrophy, inflammation and fibrosis. Modifies the transcription profile and thereby attenuates pathological remodeling in response to cardiac stress. Probably acts by competing with MEF2 transcription factors and TATA-binding proteins. This is Junctophilin-2 from Mus musculus (Mouse).